The chain runs to 548 residues: Membrane protein insertase YidC (548 aa).

Residues 6 to 26 (NLLVIALLFVSFMIWQAWEQD) form a helical membrane-spanning segment. The disordered stretch occupies residues 28 to 56 (NPQPQTQQTTQTTTTAAGSAADQGVPASG). Residues 29–42 (PQPQTQQTTQTTTT) are compositionally biased toward low complexity. 4 helical membrane-spanning segments follow: residues 350 to 370 (FVGNWGFSIIIITFIVRGIMY), 424 to 444 (FPLIIQMPIFLALYYMLMGSI), 458 to 478 (LSAQDPYYILPILMGVTMFFI), and 499 to 519 (PVIFTVFFLWFPSGLVLYYIV).

It belongs to the OXA1/ALB3/YidC family. Type 1 subfamily. In terms of assembly, interacts with the Sec translocase complex via SecD. Specifically interacts with transmembrane segments of nascent integral membrane proteins during membrane integration.

The protein localises to the cell inner membrane. Functionally, required for the insertion and/or proper folding and/or complex formation of integral membrane proteins into the membrane. Involved in integration of membrane proteins that insert both dependently and independently of the Sec translocase complex, as well as at least some lipoproteins. Aids folding of multispanning membrane proteins. In Salmonella typhimurium (strain LT2 / SGSC1412 / ATCC 700720), this protein is Membrane protein insertase YidC.